The primary structure comprises 157 residues: Galactose-specific lectin (157 aa).

Residues 12 to 157 (SIVVGTWGAE…LDYIGFHLAL (146 aa)) enclose the Jacalin-type lectin domain. A glycan (N-linked (GlcNAc...) asparagine) is linked at Asn45.

This sequence belongs to the jacalin lectin family. As to quaternary structure, tetramer of heterodimers of light and heavy chains which are non-covalently linked. N-linked carbohydrates at Asn-45 can be of complex or paucimannose type.

Alpha-D-galactose-specific lectin. Has hemagglutinating activity towards human and rabbit erythrocytes. Is highly cytotoxic to human cells in vitro. This Morus indica (Mulberry) protein is Galactose-specific lectin.